Reading from the N-terminus, the 64-residue chain is MKSKFAVLFFTLFLLALAIDNVTTICPPGCICNRQSVGLTCKPSPGSDMSARECLKKTCSYGYC.

Positions 1–18 are cleaved as a signal peptide; sequence MKSKFAVLFFTLFLLALA.

This sequence belongs to the scolopendra neurotoxin 6 family. In terms of processing, contains 3 disulfide bonds. As to expression, expressed by the venom gland.

It localises to the secreted. This Scolopendra mutilans (Chinese red-headed centipede) protein is Putative neurotoxin 4.